The primary structure comprises 206 residues: Inner membrane protein YnjF (206 aa).

The Periplasmic segment spans residues 1 to 37 (MLDRHLHPRIKPLLHQCVRVLDKPGITPDGLTLVGFA). A helical membrane pass occupies residues 38-60 (IGVLALPFLALGWYLAALVVILL). Residues 61 to 79 (NRLLDGLDGALARRRELTD) are Cytoplasmic-facing. A helical transmembrane segment spans residues 80–102 (AGGFLDISLDFLFYALVPFGFIL). Topologically, residues 103-111 (AAPEQNALA) are periplasmic. The chain crosses the membrane as a helical span at residues 112-134 (GGWLLFAFIGTGSSFLAFAALAA). The Cytoplasmic segment spans residues 135 to 146 (KHQIDNPGYAHK). A helical transmembrane segment spans residues 147–169 (SFYYLGGLTEGTETILLFVLGCL). The Periplasmic segment spans residues 170 to 173 (FPAW). A helical transmembrane segment spans residues 174 to 196 (FAWFAWIFGALCWMTTFTRVWSG). Residues 197 to 206 (YLTLKSLQRQ) lie on the Cytoplasmic side of the membrane.

This sequence belongs to the CDP-alcohol phosphatidyltransferase class-I family.

It is found in the cell inner membrane. The protein is Inner membrane protein YnjF (ynjF) of Escherichia coli (strain K12).